The following is a 788-amino-acid chain: Ribonucleoside-diphosphate reductase subunit alpha (788 aa).

The region spanning 2-92 (ITVVKRNGRI…LYDLYHKVSG (91 aa)) is the ATP-cone domain. ATP is bound by residues Lys-6, 12–18 (EPLDITK), and Thr-52. A GDP-binding site is contributed by Thr-200. The cysteines at positions 216 and 497 are disulfide-linked. DTTP is bound by residues 223–225 (DNI) and Arg-253. Residue Asn-424 coordinates GDP. The active-site Proton acceptor is Asn-424. Cys-426 (cysteine radical intermediate) is an active-site residue. GDP-binding positions include Glu-428 and 661–663 (SSI). Glu-428 (proton acceptor) is an active-site residue.

This sequence belongs to the ribonucleoside diphosphate reductase large chain family. In terms of assembly, tetramer of two alpha and two beta subunits.

It carries out the reaction a 2'-deoxyribonucleoside 5'-diphosphate + [thioredoxin]-disulfide + H2O = a ribonucleoside 5'-diphosphate + [thioredoxin]-dithiol. Its activity is regulated as follows. Under complex allosteric control mediated by deoxynucleoside triphosphates and ATP binding to separate specificity and activation sites on the alpha subunit. The type of nucleotide bound at the specificity site determines substrate preference. It seems probable that ATP makes the enzyme reduce CDP and UDP, dGTP favors ADP reduction and dTTP favors GDP reduction. Stimulated by ATP and inhibited by dATP binding to the activity site. Provides the precursors necessary for DNA synthesis. Catalyzes the biosynthesis of deoxyribonucleotides from the corresponding ribonucleotides. This Helicobacter pylori (strain ATCC 700392 / 26695) (Campylobacter pylori) protein is Ribonucleoside-diphosphate reductase subunit alpha (nrdA).